Consider the following 264-residue polypeptide: Ribosomal RNA small subunit methyltransferase A (264 aa).

S-adenosyl-L-methionine contacts are provided by N12, L14, G40, E61, D86, and N105.

Belongs to the class I-like SAM-binding methyltransferase superfamily. rRNA adenine N(6)-methyltransferase family. RsmA subfamily.

It is found in the cytoplasm. The catalysed reaction is adenosine(1518)/adenosine(1519) in 16S rRNA + 4 S-adenosyl-L-methionine = N(6)-dimethyladenosine(1518)/N(6)-dimethyladenosine(1519) in 16S rRNA + 4 S-adenosyl-L-homocysteine + 4 H(+). Its function is as follows. Specifically dimethylates two adjacent adenosines (A1518 and A1519) in the loop of a conserved hairpin near the 3'-end of 16S rRNA in the 30S particle. May play a critical role in biogenesis of 30S subunits. This is Ribosomal RNA small subunit methyltransferase A from Fusobacterium nucleatum subsp. nucleatum (strain ATCC 25586 / DSM 15643 / BCRC 10681 / CIP 101130 / JCM 8532 / KCTC 2640 / LMG 13131 / VPI 4355).